A 404-amino-acid chain; its full sequence is Probable tRNA sulfurtransferase (404 aa).

Residues 60 to 165 form the THUMP domain; it reads QPVVEALKLV…DEAAYISYEE (106 aa). Residues 183-184, 208-209, Arg-265, Gly-287, and Gln-296 each bind ATP; these read ML and HF.

This sequence belongs to the ThiI family.

Its subcellular location is the cytoplasm. It carries out the reaction [ThiI sulfur-carrier protein]-S-sulfanyl-L-cysteine + a uridine in tRNA + 2 reduced [2Fe-2S]-[ferredoxin] + ATP + H(+) = [ThiI sulfur-carrier protein]-L-cysteine + a 4-thiouridine in tRNA + 2 oxidized [2Fe-2S]-[ferredoxin] + AMP + diphosphate. The enzyme catalyses [ThiS sulfur-carrier protein]-C-terminal Gly-Gly-AMP + S-sulfanyl-L-cysteinyl-[cysteine desulfurase] + AH2 = [ThiS sulfur-carrier protein]-C-terminal-Gly-aminoethanethioate + L-cysteinyl-[cysteine desulfurase] + A + AMP + 2 H(+). It participates in cofactor biosynthesis; thiamine diphosphate biosynthesis. In terms of biological role, catalyzes the ATP-dependent transfer of a sulfur to tRNA to produce 4-thiouridine in position 8 of tRNAs, which functions as a near-UV photosensor. Also catalyzes the transfer of sulfur to the sulfur carrier protein ThiS, forming ThiS-thiocarboxylate. This is a step in the synthesis of thiazole, in the thiamine biosynthesis pathway. The sulfur is donated as persulfide by IscS. In Streptococcus pyogenes serotype M6 (strain ATCC BAA-946 / MGAS10394), this protein is Probable tRNA sulfurtransferase.